Here is a 357-residue protein sequence, read N- to C-terminus: Protein RecA (357 aa).

ATP is bound at residue 67-74 (GPESSGKT). The disordered stretch occupies residues 335 to 357 (LASSASDDESTEGNIDLETGEIF).

This sequence belongs to the RecA family.

The protein localises to the cytoplasm. In terms of biological role, can catalyze the hydrolysis of ATP in the presence of single-stranded DNA, the ATP-dependent uptake of single-stranded DNA by duplex DNA, and the ATP-dependent hybridization of homologous single-stranded DNAs. It interacts with LexA causing its activation and leading to its autocatalytic cleavage. This chain is Protein RecA, found in Shewanella putrefaciens (strain CN-32 / ATCC BAA-453).